The sequence spans 883 residues: MSTTSEIRRTFLDFFVKNGHQEVASSPLVPLNDPTLMFTNAGMVQFKNVFTGAETRPYHRATTSQKCVRAGGKHNDLDNVGYTARHHTFFEMLGNFSFGDYFKEQAIDFAWRLITEEYALPKDRLLVTVHTSDEDAAGLWRKVAGLPDERIIRIPTNDNFWAMGDTGPCGPCSEIFFDHGPKVAGGPPGSADENGDRFIEIWNLVFMQFEQLTVDQRVALPRPSIDTGMGLERVAAVLQGKHDNYDIDLMRALIEAIASAAGTDPDGPHKVSHRVIADHLRSACFLIADGVLPSNEGRGYVLRRIMRRAMRHAHMMGCVDPLMFKLVPALNREMADQFPELNRANALITETLKLEETRFKQMLDRGLKLLAEETGDLASGDSLPGPVAFKLYDTYGFPLDLTQDALRPRGIGVDTAGFDAAMARQREDARKSWTGSGDHATEAVWFDIRDRVGASEFLGYTSTDAEGAIVALVVDGKVVESAPADTEVAVIANQTPFYGESGGQMGDAGEIRLAEGGKVVVRDTAKKLGALHVHIGRVEGATIRVGQAARFVVDTERRDALRSHHSATHLLHEALRRRLGEHVTQKGSLVAPDRLRFDISHPKPLSAAEIRVVEDDVNREIRANAEITTQIMDPDSAIEAGAMALFGEKYGEEVRVVSMGRREPGANRPFSVELCGGTHARRTGDIGFFKIIGEGAVASGVRRIEAVTGQAAFEHIEAQDDLVSGAAQLLKVTPADLPGRIQALLDDRRRLERDLADARRKLATGGGGAAAPAVVEINGVKWVGRLLEDVPAKDLKGMVDEVKKQLGSGVVALIAVADGKASLVVGVTEDLVGRFDAVALVRAGAGAIGGKGGGGRPDMAQAGGPDGAQAGAALAAIEAALAG.

4 residues coordinate Zn(2+): H565, H569, C675, and H679.

Belongs to the class-II aminoacyl-tRNA synthetase family. Zn(2+) serves as cofactor.

Its subcellular location is the cytoplasm. The enzyme catalyses tRNA(Ala) + L-alanine + ATP = L-alanyl-tRNA(Ala) + AMP + diphosphate. Its function is as follows. Catalyzes the attachment of alanine to tRNA(Ala) in a two-step reaction: alanine is first activated by ATP to form Ala-AMP and then transferred to the acceptor end of tRNA(Ala). Also edits incorrectly charged Ser-tRNA(Ala) and Gly-tRNA(Ala) via its editing domain. The chain is Alanine--tRNA ligase from Rhodospirillum rubrum (strain ATCC 11170 / ATH 1.1.1 / DSM 467 / LMG 4362 / NCIMB 8255 / S1).